Reading from the N-terminus, the 466-residue chain is 3-isopropylmalate dehydratase large subunit (466 aa).

Residues Cys347, Cys407, and Cys410 each contribute to the [4Fe-4S] cluster site.

It belongs to the aconitase/IPM isomerase family. LeuC type 1 subfamily. As to quaternary structure, heterodimer of LeuC and LeuD. [4Fe-4S] cluster is required as a cofactor.

The enzyme catalyses (2R,3S)-3-isopropylmalate = (2S)-2-isopropylmalate. Its pathway is amino-acid biosynthesis; L-leucine biosynthesis; L-leucine from 3-methyl-2-oxobutanoate: step 2/4. Catalyzes the isomerization between 2-isopropylmalate and 3-isopropylmalate, via the formation of 2-isopropylmaleate. In Shigella flexneri serotype 5b (strain 8401), this protein is 3-isopropylmalate dehydratase large subunit.